The following is a 397-amino-acid chain: Elongation factor Tu (397 aa).

The tr-type G domain maps to 10–207 (LPHVNVGTIG…TLDSYIPEPE (198 aa)). The tract at residues 19-26 (GHVDHGKT) is G1. 19 to 26 (GHVDHGKT) is a binding site for GTP. Thr26 lines the Mg(2+) pocket. The interval 60–64 (GITIN) is G2. The G3 stretch occupies residues 81-84 (DCPG). GTP contacts are provided by residues 81-85 (DCPGH) and 136-139 (NKAD). The tract at residues 136 to 139 (NKAD) is G4. The segment at 174 to 176 (SAR) is G5.

The protein belongs to the TRAFAC class translation factor GTPase superfamily. Classic translation factor GTPase family. EF-Tu/EF-1A subfamily. Monomer.

Its subcellular location is the cytoplasm. It catalyses the reaction GTP + H2O = GDP + phosphate + H(+). GTP hydrolase that promotes the GTP-dependent binding of aminoacyl-tRNA to the A-site of ribosomes during protein biosynthesis. In Pseudomonas fluorescens (strain Pf0-1), this protein is Elongation factor Tu.